The following is a 2410-amino-acid chain: Cell wall alpha-1,3-glucan synthase ags1 (2410 aa).

A phosphoserine mark is found at S1643, S1644, and S1651. The residue at position 1653 (T1653) is a Phosphothreonine. A disordered region spans residues 1685 to 1706 (SLSLGSRRGPGHTTEDDASDGL). Phosphoserine occurs at positions 1738 and 1812. The interval 1796–1827 (QDDLSDPARSVDSDSVSPPLPPFVAGSNPNAR) is disordered. The segment covering 1802-1827 (PARSVDSDSVSPPLPPFVAGSNPNAR) has biased composition (low complexity).

This sequence belongs to the glycosyltransferase group 1 family. Interacts with sad1.

It catalyses the reaction [(1-&gt;3)-alpha-D-glucosyl](n) + UDP-alpha-D-glucose = [(1-&gt;3)-alpha-D-glucosyl](n+1) + UDP + H(+). Its function is as follows. Required for alpha-1,3-glucan and alpha-1,4-glucan production which are required for cell wall synthesis. This is Cell wall alpha-1,3-glucan synthase ags1 (ags1) from Schizosaccharomyces pombe (strain 972 / ATCC 24843) (Fission yeast).